The following is a 738-amino-acid chain: 1,4-alpha-glucan branching enzyme GlgB (738 aa).

Asp417 functions as the Nucleophile in the catalytic mechanism. Glu472 serves as the catalytic Proton donor.

The protein belongs to the glycosyl hydrolase 13 family. GlgB subfamily. In terms of assembly, monomer.

It catalyses the reaction Transfers a segment of a (1-&gt;4)-alpha-D-glucan chain to a primary hydroxy group in a similar glucan chain.. It functions in the pathway glycan biosynthesis; glycogen biosynthesis. Its function is as follows. Catalyzes the formation of the alpha-1,6-glucosidic linkages in glycogen by scission of a 1,4-alpha-linked oligosaccharide from growing alpha-1,4-glucan chains and the subsequent attachment of the oligosaccharide to the alpha-1,6 position. The polypeptide is 1,4-alpha-glucan branching enzyme GlgB (Burkholderia pseudomallei (strain 668)).